Reading from the N-terminus, the 466-residue chain is UDP-glycosyltransferase 79 (466 aa).

Residue histidine 27 is the Proton acceptor of the active site. Residue histidine 27 participates in UDP-alpha-D-glucose binding. The active-site Charge relay is aspartate 120. UDP-alpha-D-glucose-binding residues include serine 142, threonine 291, phenylalanine 343, cysteine 344, histidine 361, tryptophan 364, asparagine 365, serine 366, glutamate 369, aspartate 385, and glutamine 386. 4 residues coordinate UDP: threonine 291, phenylalanine 343, cysteine 344, and histidine 361. Asparagine 365, serine 366, and glutamate 369 together coordinate UDP.

It belongs to the UDP-glycosyltransferase family.

Functionally, involved in the detoxification of the Fusarium mycotoxin deoxynivalenol by the transfer of glucose from UDP-D-glucose to the hydroxyl group at C-3, forming deoxynivalenol-3-O-beta-D-glucoside. This is UDP-glycosyltransferase 79 from Oryza sativa subsp. japonica (Rice).